The sequence spans 147 residues: Nitric oxide reductase subunit C (147 aa).

A helical; Signal-anchor transmembrane segment spans residues 13–29 (VFYGGSLFFIAVFVGLT). Heme c-binding residues include Cys59, Cys62, and His63.

Heterodimer of cytochromes b (large subunit) and c (small subunit).

It localises to the cell membrane. In terms of biological role, component of the anaerobic respiratory chain that transforms nitrate to dinitrogen (denitrification). In Cereibacter sphaeroides (strain ATCC 17025 / ATH 2.4.3) (Rhodobacter sphaeroides), this protein is Nitric oxide reductase subunit C (norC).